Consider the following 458-residue polypeptide: ATP synthase subunit beta (458 aa).

An ATP-binding site is contributed by 147 to 154 (GGAGVGKT).

This sequence belongs to the ATPase alpha/beta chains family. In terms of assembly, F-type ATPases have 2 components, CF(1) - the catalytic core - and CF(0) - the membrane proton channel. CF(1) has five subunits: alpha(3), beta(3), gamma(1), delta(1), epsilon(1). CF(0) has three main subunits: a(1), b(2) and c(9-12). The alpha and beta chains form an alternating ring which encloses part of the gamma chain. CF(1) is attached to CF(0) by a central stalk formed by the gamma and epsilon chains, while a peripheral stalk is formed by the delta and b chains.

It localises to the cell inner membrane. It carries out the reaction ATP + H2O + 4 H(+)(in) = ADP + phosphate + 5 H(+)(out). Its function is as follows. Produces ATP from ADP in the presence of a proton gradient across the membrane. The catalytic sites are hosted primarily by the beta subunits. The polypeptide is ATP synthase subunit beta (Chromohalobacter salexigens (strain ATCC BAA-138 / DSM 3043 / CIP 106854 / NCIMB 13768 / 1H11)).